We begin with the raw amino-acid sequence, 231 residues long: Killer cell lectin-like receptor subfamily F member 1 (231 aa).

The Cytoplasmic segment spans residues 1–38 (MQDEERYMTLNVQSKKRTSTQTTQLTFKDYSVVLHWYK). Residue Tyr7 is modified to Phosphotyrosine. The helical; Signal-anchor for type II membrane protein transmembrane segment at 39–59 (ILLGISGTLNGILALALISLI) threads the bilayer. Residues 60-231 (LLVSQGVLLK…SSVFKWICQY (172 aa)) lie on the Extracellular side of the membrane. Asn77, Asn91, Asn96, and Asn176 each carry an N-linked (GlcNAc...) asparagine glycan. The region spanning 121–230 (YRGKCYWFSN…CSSVFKWICQ (110 aa)) is the C-type lectin domain. Intrachain disulfides connect Cys142-Cys229 and Cys208-Cys221.

In terms of assembly, homodimer. Interacts with CLEC2B. Post-translationally, phosphorylated on Tyr-7; this phosphorylation is required for NKp80/KLRF1-mediated cytotoxicity.

It is found in the membrane. Functions as an activating receptor involved in immunosurveillance upon binding to various ligands displayed at the surface of myeloid cells. Upon interaction with CLEC2B ligand, stimulates NK-cell cytotoxicity and cytokine production leading to the cytolysis of malignant CLEC2B-expressing myeloid cells. Actviation of the common cytotoxicity pathway involves SRC and SYK kinases. This is Killer cell lectin-like receptor subfamily F member 1 (KLRF1) from Macaca fascicularis (Crab-eating macaque).